A 586-amino-acid chain; its full sequence is MASTYNSFNLHTTAEKFYIEACDDGVGDVLAIDRVSTEKTLTVRKDVPPSAVTRPICGIMGTIRLVAGVYLIVITKKKKVGDLLGHAVWKASDFDIISYKKTVLHLTDNQMQDNKVFLSMLNSVLNTDGFYFATDYDLTHTLQRLSNTSPEFQEMTLLERADQRFVWNGHLLREFMAQPELHRFVFPVIHGFIAMRSCCINGKIFDWNLISRRSCFRAGVRYYVRGIDSEGHAANFVETEQIIQYNGAKASFIQTRGSIPFYWSQRPNLKYKPKPQISKSINHLDGFQRHFDSQIIIYGKQVILNLVNQKGSEKPLEQAFAKMVGSLGNGMIKYIAFDFHKECSRMRWHRLQILVDTVAELQDEFGYFLVDSDGSVQMQQDGTFRSNCMDCLDRTNVVQSLLARRSLQSQLERMAVLHVGQRIEEQADFEKIYKNAWADNANACAKQYAGTGALKTDFTRTGKRTQWGLLMDGWNSMIRYYKNNFSDGFRQDSIDLFLGNYAVEEADMNTPLHEPKDWKFLTLPIIMVVAFSMCIICLLMAGDTWTETLAYVLFWGSASVVTGGVILFNGRDFVDAPRLVQKEKMD.

The Cytoplasmic portion of the chain corresponds to 1-519 (MASTYNSFNL…TPLHEPKDWK (519 aa)). The SAC domain maps to 121 to 450 (LNSVLNTDGF…ANACAKQYAG (330 aa)). Residues 451-586 (TGALKTDFTR…PRLVQKEKMD (136 aa)) form an essential for phosphatidylinositol-4-phosphate phosphatase activity region. The chain crosses the membrane as a helical span at residues 520-540 (FLTLPIIMVVAFSMCIICLLM). At 541 to 547 (AGDTWTE) the chain is on the lumenal side. Residues 548 to 568 (TLAYVLFWGSASVVTGGVILF) traverse the membrane as a helical segment. The Cytoplasmic segment spans residues 569-586 (NGRDFVDAPRLVQKEKMD).

The protein localises to the endoplasmic reticulum membrane. The protein resides in the golgi apparatus membrane. It carries out the reaction a 1,2-diacyl-sn-glycero-3-phospho-(1D-myo-inositol-3-phosphate) + H2O = a 1,2-diacyl-sn-glycero-3-phospho-(1D-myo-inositol) + phosphate. It catalyses the reaction a 1,2-diacyl-sn-glycero-3-phospho-(1D-myo-inositol 4-phosphate) + H2O = a 1,2-diacyl-sn-glycero-3-phospho-(1D-myo-inositol) + phosphate. Phosphoinositide phosphatase which catalyzes the hydrolysis of phosphatidylinositol 4-phosphate (PtdIns(4)P), phosphatidylinositol 3-phosphate (PtdIns(3)P) and has low activity towards phosphatidylinositol-3,5-bisphosphate (PtdIns(3,5)P2). This Danio rerio (Zebrafish) protein is Phosphatidylinositol-3-phosphatase SAC1-B (sacm1lb).